We begin with the raw amino-acid sequence, 306 residues long: Ornithine carbamoyltransferase (306 aa).

Residues 53–56 (STRT), glutamine 80, arginine 104, and 131–134 (HPCQ) contribute to the carbamoyl phosphate site. Residues asparagine 162, aspartate 219, and 223–224 (SM) each bind L-ornithine. Carbamoyl phosphate is bound by residues 259 to 260 (CL) and arginine 287.

The protein belongs to the aspartate/ornithine carbamoyltransferase superfamily. OTCase family.

The protein localises to the cytoplasm. It carries out the reaction carbamoyl phosphate + L-ornithine = L-citrulline + phosphate + H(+). The protein operates within amino-acid biosynthesis; L-arginine biosynthesis; L-arginine from L-ornithine and carbamoyl phosphate: step 1/3. In terms of biological role, reversibly catalyzes the transfer of the carbamoyl group from carbamoyl phosphate (CP) to the N(epsilon) atom of ornithine (ORN) to produce L-citrulline. This Acinetobacter baumannii (strain ATCC 17978 / DSM 105126 / CIP 53.77 / LMG 1025 / NCDC KC755 / 5377) protein is Ornithine carbamoyltransferase.